The chain runs to 192 residues: Casparian strip membrane protein 4 (192 aa).

Topologically, residues 1–29 (MTKDVVIEHGESSKAPLVPAPVAAGVGRA) are cytoplasmic. A helical membrane pass occupies residues 30–50 (VSIADVFLRFLSIVATIASAI). The Extracellular segment spans residues 51–79 (SMGTTNETLPFFTQFIQFEAKYSDLPSFT). Asn56 is a glycosylation site (N-linked (GlcNAc...) asparagine). A helical membrane pass occupies residues 80 to 100 (FFVAANAVVCTYLVLSIPLSI). Residues 101–112 (VHIIRPRARYSR) are Cytoplasmic-facing. The chain crosses the membrane as a helical span at residues 113–133 (LILVFFDAVMLALLTAGASAA). The Extracellular segment spans residues 134-166 (AAIVYLAHKGNVRANWFAICQQFDSFCERISGS). Residues 167 to 187 (LIGSFAAMVLLIVLIFLSAFA) traverse the membrane as a helical segment. Topologically, residues 188–192 (LARRH) are cytoplasmic.

The protein belongs to the Casparian strip membrane proteins (CASP) family. In terms of assembly, homodimer and heterodimers.

Its subcellular location is the cell membrane. Functionally, regulates membrane-cell wall junctions and localized cell wall deposition. Required for establishment of the Casparian strip membrane domain (CSD) and the subsequent formation of Casparian strips, a cell wall modification of the root endodermis that determines an apoplastic barrier between the intraorganismal apoplasm and the extraorganismal apoplasm and prevents lateral diffusion. The protein is Casparian strip membrane protein 4 of Sorghum bicolor (Sorghum).